The chain runs to 49 residues: Large ribosomal subunit protein bL33 (49 aa).

This sequence belongs to the bacterial ribosomal protein bL33 family.

The polypeptide is Large ribosomal subunit protein bL33 (Syntrophomonas wolfei subsp. wolfei (strain DSM 2245B / Goettingen)).